A 1041-amino-acid chain; its full sequence is Collagen alpha-2(I) chain (1041 aa).

The tract at residues 1–1041 (SGGFDFSFLP…FGYEGDFYRA (1041 aa)) is disordered. 4 positions are modified to 4-hydroxyproline: Pro-10, Pro-13, Pro-39, and Pro-45. Low complexity-rich tracts occupy residues 25–45 (LGPG…SGAP) and 55–76 (EPGE…PPGK). The segment covering 77-91 (AGEDGHPGKPGRPGE) has biased composition (basic and acidic residues). At Lys-113 the chain carries 5-hydroxylysine; alternate. O-linked (Gal...) hydroxylysine; alternate glycosylation is present at Lys-113. Low complexity-rich tracts occupy residues 174-189 (SVGP…SAGP) and 235-256 (PGAN…AGAP). Residues 290–299 (GESGGKGEPG) are compositionally biased toward gly residues. Over residues 300–310 (SAGPQGPPGSS) the composition is skewed to low complexity. Residues 332–341 (GLRGGPGSRG) show a composition bias toward gly residues. Residues 354–370 (PAGARGASGPAGVRGPS) are compositionally biased toward low complexity. Pro-376 and Pro-379 each carry 4-hydroxyproline. The span at 405-424 (LPGIDGRPGPIGPAGARGEA) shows a compositional bias: low complexity. Gly residues predominate over residues 466-475 (GVQGGKGEQG). Low complexity-rich tracts occupy residues 522–539 (SGES…SRGP) and 551–561 (EPGVVGAPGTA). Over residues 562-571 (GPAGSGGLPG) the composition is skewed to gly residues. 2 stretches are compositionally biased toward low complexity: residues 594–638 (VGTT…PRGS) and 645–665 (VGPA…QPGA). The span at 666-675 (KGERGTKGPK) shows a compositional bias: basic and acidic residues. The segment covering 683–693 (PTGPVGSAGPA) has biased composition (low complexity). Over residues 703-712 (GSRGDGGPPG) the composition is skewed to gly residues. The segment covering 714-723 (TGFPGAAGRT) has biased composition (low complexity). The span at 754–768 (GPVGRGETGAGGPPG) shows a compositional bias: gly residues. Composition is skewed to low complexity over residues 769 to 803 (FTGE…LGLP) and 811 to 821 (LPGVAGAVGEP). Residues 822–840 (GPLGIGPPGARGPSGGVPG) show a composition bias toward gly residues. Low complexity-rich tracts occupy residues 874-887 (YAGN…AGAP) and 903-918 (EPGP…ALGP). The segment covering 928 to 939 (RGDKGEAGDKGP) has biased composition (basic and acidic residues). Residues 1013-1023 (PAGPPGPPGPP) show a composition bias toward pro residues.

The protein belongs to the fibrillar collagen family. Trimers of one alpha 2(I) and two alpha 1(I) chains. Interacts (via C-terminus) with TMEM131 (via PapD-L domain); the interaction is direct and is involved in assembly and TRAPPIII ER-to-Golgi transport complex-dependent secretion of collagen. In terms of processing, prolines at the third position of the tripeptide repeating unit (G-X-Y) are hydroxylated in some or all of the chains. In terms of tissue distribution, expressed in bones.

The protein localises to the secreted. Its subcellular location is the extracellular space. It is found in the extracellular matrix. In terms of biological role, type I collagen is a member of group I collagen (fibrillar forming collagen). In Paramylodon harlani (Harlan's ground sloth), this protein is Collagen alpha-2(I) chain.